Consider the following 279-residue polypeptide: Large ribosomal subunit protein uL2 (279 aa).

Disordered regions lie at residues 1–28 (MPAR…TKEK) and 221–279 (RGTV…GRRR). Residues 12 to 22 (GRRNSSVLTRD) are compositionally biased toward polar residues.

This sequence belongs to the universal ribosomal protein uL2 family. Part of the 50S ribosomal subunit. Forms a bridge to the 30S subunit in the 70S ribosome.

Functionally, one of the primary rRNA binding proteins. Required for association of the 30S and 50S subunits to form the 70S ribosome, for tRNA binding and peptide bond formation. It has been suggested to have peptidyltransferase activity; this is somewhat controversial. Makes several contacts with the 16S rRNA in the 70S ribosome. The chain is Large ribosomal subunit protein uL2 from Rubrobacter xylanophilus (strain DSM 9941 / JCM 11954 / NBRC 16129 / PRD-1).